Reading from the N-terminus, the 72-residue chain is Cell division protein ZapB (72 aa).

The stretch at 3–71 (LSIIDQLEEK…LRSLLGQIDN (69 aa)) forms a coiled coil.

Belongs to the ZapB family. Homodimer. The ends of the coiled-coil dimer bind to each other, forming polymers. Interacts with FtsZ.

It is found in the cytoplasm. Its function is as follows. Non-essential, abundant cell division factor that is required for proper Z-ring formation. It is recruited early to the divisome by direct interaction with FtsZ, stimulating Z-ring assembly and thereby promoting cell division earlier in the cell cycle. Its recruitment to the Z-ring requires functional FtsA or ZipA. The protein is Cell division protein ZapB of Haemophilus ducreyi (strain 35000HP / ATCC 700724).